We begin with the raw amino-acid sequence, 885 residues long: Protein kintoun (885 aa).

Disordered regions lie at residues 208-235, 371-390, 607-636, 644-663, 781-806, and 819-871; these read LSKN…ADAG, LSRE…PVED, ELQQ…ESAC, EHHE…QRSY, RRLS…QPAH, and NNNH…MMFE. Over residues 213 to 232 the composition is skewed to basic and acidic residues; that stretch reads TAEEKEPHPLEHMYPKKPEA. At Ser-376 the chain carries Phosphoserine. Over residues 612–629 the composition is skewed to basic residues; sequence HHQKKLNKKQRKRNKKQR. The residue at position 784 (Ser-784) is a Phosphoserine. A compositionally biased stretch (basic and acidic residues) spans 824-837; sequence HVKDNKKQSLHDSG. Positions 842 to 855 are enriched in low complexity; it reads NGSINNKNNHSNEN.

The protein belongs to the PIH1 family. Kintoun subfamily. Interacts with Pp1alpha-96A, Pp1-87B, Pp1-13C and flw.

Its subcellular location is the cytoplasm. Required for cytoplasmic pre-assembly of axonemal dyneins, thereby playing a central role in motility in cilia and flagella. Involved in pre-assembly of dynein arm complexes in the cytoplasm before intraflagellar transport loads them for the ciliary compartment. The chain is Protein kintoun from Drosophila mojavensis (Fruit fly).